The sequence spans 96 residues: Large ribosomal subunit protein eL21 (96 aa).

This sequence belongs to the eukaryotic ribosomal protein eL21 family.

The protein is Large ribosomal subunit protein eL21 of Methanosphaerula palustris (strain ATCC BAA-1556 / DSM 19958 / E1-9c).